The sequence spans 360 residues: Protein RecA (360 aa).

An ATP-binding site is contributed by G69–T76.

The protein belongs to the RecA family.

Its subcellular location is the cytoplasm. In terms of biological role, can catalyze the hydrolysis of ATP in the presence of single-stranded DNA, the ATP-dependent uptake of single-stranded DNA by duplex DNA, and the ATP-dependent hybridization of homologous single-stranded DNAs. It interacts with LexA causing its activation and leading to its autocatalytic cleavage. The protein is Protein RecA of Trichodesmium erythraeum (strain IMS101).